The sequence spans 182 residues: UPF0397 protein BCAH187_A2708 (182 aa).

5 consecutive transmembrane segments (helical) span residues 9-29 (VVAI…GFSI), 40-60 (AILT…IGLI), 71-91 (WGIW…MGFI), 114-134 (ITGL…DIIV), and 142-162 (IVIQ…VLGL).

The protein belongs to the UPF0397 family.

Its subcellular location is the cell membrane. This Bacillus cereus (strain AH187) protein is UPF0397 protein BCAH187_A2708.